A 504-amino-acid chain; its full sequence is Maturase K (504 aa).

The protein belongs to the intron maturase 2 family. MatK subfamily.

The protein localises to the plastid. It is found in the chloroplast. Its function is as follows. Usually encoded in the trnK tRNA gene intron. Probably assists in splicing its own and other chloroplast group II introns. In Fagus hayatae (Formosan elm), this protein is Maturase K.